Reading from the N-terminus, the 866-residue chain is DNA topoisomerase 3-beta (866 aa).

A Toprim domain is found at Thr4–Val149. 3 residues coordinate Mg(2+): Glu10, Asp114, and Asp116. Positions Ser165–Tyr585 constitute a Topo IA-type catalytic domain. The tract at residues Ser207 to Gln212 is interaction with DNA. Tyr329 (O-(5'-phospho-DNA)-tyrosine intermediate) is an active-site residue. A compositionally biased stretch (basic residues) spans Met830 to Ser853. The disordered stretch occupies residues Met830 to Phe866. Positions Ser854 to Phe866 are enriched in basic and acidic residues.

Belongs to the type IA topoisomerase family. It depends on Mg(2+) as a cofactor.

It catalyses the reaction ATP-independent breakage of single-stranded DNA, followed by passage and rejoining.. In terms of biological role, releases the supercoiling and torsional tension of DNA introduced during the DNA replication and transcription by transiently cleaving and rejoining one strand of the DNA duplex. Introduces a single-strand break via transesterification at a target site in duplex DNA. The scissile phosphodiester is attacked by the catalytic tyrosine of the enzyme, resulting in the formation of a DNA-(5'-phosphotyrosyl)-enzyme intermediate and the expulsion of a 3'-OH DNA strand. The free DNA strand than undergoes passage around the unbroken strand thus removing DNA supercoils. Finally, in the religation step, the DNA 3'-OH attacks the covalent intermediate to expel the active-site tyrosine and restore the DNA phosphodiester backbone. This Oryza sativa subsp. japonica (Rice) protein is DNA topoisomerase 3-beta (TOP3B).